The primary structure comprises 225 residues: Glycerol-3-phosphate acyltransferase (225 aa).

The next 6 helical transmembrane spans lie at 1-21, 56-76, 95-115, 134-154, 159-178, and 182-201; these read MAIW…LGSF, GPGL…VALV, IGLW…LGHS, VLLV…ALVV, IVSL…MFVA, and LAYV…RHWA.

It belongs to the PlsY family. Probably interacts with PlsX.

It is found in the cell inner membrane. It catalyses the reaction an acyl phosphate + sn-glycerol 3-phosphate = a 1-acyl-sn-glycero-3-phosphate + phosphate. It participates in lipid metabolism; phospholipid metabolism. Catalyzes the transfer of an acyl group from acyl-phosphate (acyl-PO(4)) to glycerol-3-phosphate (G3P) to form lysophosphatidic acid (LPA). This enzyme utilizes acyl-phosphate as fatty acyl donor, but not acyl-CoA or acyl-ACP. The sequence is that of Glycerol-3-phosphate acyltransferase from Acaryochloris marina (strain MBIC 11017).